A 127-amino-acid polypeptide reads, in one-letter code: Methylglyoxal synthase (127 aa).

In terms of domain architecture, MGS-like spans 1 to 127; it reads MEGQRCIALI…ENLIDFNSAD (127 aa). Residues H12, K16, 38 to 41, and 59 to 60 each bind substrate; these read TGTT and SG. D65 (proton donor/acceptor) is an active-site residue. H92 serves as a coordination point for substrate.

Belongs to the methylglyoxal synthase family.

The enzyme catalyses dihydroxyacetone phosphate = methylglyoxal + phosphate. Functionally, catalyzes the formation of methylglyoxal from dihydroxyacetone phosphate. The chain is Methylglyoxal synthase from Agrobacterium fabrum (strain C58 / ATCC 33970) (Agrobacterium tumefaciens (strain C58)).